A 528-amino-acid polypeptide reads, in one-letter code: Xylose import ATP-binding protein XylG (528 aa).

2 consecutive ABC transporter domains span residues 6–245 (LQMN…VGRE) and 262–507 (FEAR…LSHP). Position 38-45 (38-45 (GENGAGKS)) interacts with ATP. The interval 504–528 (LSHPGDPDSNDPANNNHNDNDRKTT) is disordered.

It belongs to the ABC transporter superfamily. Xylose importer (TC 3.A.1.2.4) family. In terms of assembly, the complex is composed of two ATP-binding proteins (XylG), two transmembrane proteins (XylH) and a solute-binding protein (XylF).

The protein resides in the cell inner membrane. The enzyme catalyses D-xylose(out) + ATP + H2O = D-xylose(in) + ADP + phosphate + H(+). In terms of biological role, part of the ABC transporter complex XylFGH involved in xylose import. Responsible for energy coupling to the transport system. This is Xylose import ATP-binding protein XylG from Pseudomonas syringae pv. tomato (strain ATCC BAA-871 / DC3000).